Reading from the N-terminus, the 299-residue chain is MTEHKSGFVSIIGRPNVGKSTFVNRVIGHKIAIMSDKAQTTRNKIQGVMTRDDAQIIFIDTPGIHKPKHKLGDYMMKVAKNTLSEIDAIMFMVNANEEIGRGDEYIIEMLKNVKTPVFLVLNKIDLVHPDELMPKIEEYQSYMDFTEIVPISALEGLNVDHFIDVLKTYLPEGPKYYPDDQISDHPEQFVVGEIIREKILHLTSEEIPHAIGVNVDRMVKESEDRVHIEATIYVERDSQKGIVIGKGGKKLKEVGKRARRDIEMLLGSKVYLELWVKVQRDWRNKVNFIRQIGYVEDQD.

The Era-type G domain occupies 5-172; the sequence is KSGFVSIIGR…IDVLKTYLPE (168 aa). The G1 stretch occupies residues 13–20; that stretch reads GRPNVGKS. A GTP-binding site is contributed by 13-20; it reads GRPNVGKS. A G2 region spans residues 39-43; it reads QTTRN. Positions 60–63 are G3; it reads DTPG. Residues 60 to 64 and 122 to 125 contribute to the GTP site; these read DTPGI and NKID. Positions 122–125 are G4; sequence NKID. The interval 151–153 is G5; sequence ISA. The KH type-2 domain maps to 203 to 280; sequence TSEEIPHAIG…YLELWVKVQR (78 aa).

This sequence belongs to the TRAFAC class TrmE-Era-EngA-EngB-Septin-like GTPase superfamily. Era GTPase family. In terms of assembly, monomer.

It is found in the cytoplasm. It localises to the cell membrane. In terms of biological role, an essential GTPase that binds both GDP and GTP, with rapid nucleotide exchange. Plays a role in 16S rRNA processing and 30S ribosomal subunit biogenesis and possibly also in cell cycle regulation and energy metabolism. In Staphylococcus aureus (strain Mu3 / ATCC 700698), this protein is GTPase Era.